Consider the following 37-residue polypeptide: Large ribosomal subunit protein bL36A (37 aa).

The protein belongs to the bacterial ribosomal protein bL36 family.

In Kocuria rhizophila (strain ATCC 9341 / DSM 348 / NBRC 103217 / DC2201), this protein is Large ribosomal subunit protein bL36A.